Here is an 82-residue protein sequence, read N- to C-terminus: Neuromacin (82 aa).

Positions 1-23 (MALLNKLLCFALVFMIFGEFVTP) are cleaved as a signal peptide. 4 disulfide bridges follow: C25/C32, C47/C51, C61/C69, and C79/C81.

This sequence belongs to the macin family.

Its subcellular location is the secreted. The sequence is that of Neuromacin from Hirudo medicinalis (Medicinal leech).